A 294-amino-acid chain; its full sequence is Ribosomal protein L11 methyltransferase (294 aa).

T145, G167, D189, and N230 together coordinate S-adenosyl-L-methionine.

It belongs to the methyltransferase superfamily. PrmA family.

Its subcellular location is the cytoplasm. It carries out the reaction L-lysyl-[protein] + 3 S-adenosyl-L-methionine = N(6),N(6),N(6)-trimethyl-L-lysyl-[protein] + 3 S-adenosyl-L-homocysteine + 3 H(+). Functionally, methylates ribosomal protein L11. The protein is Ribosomal protein L11 methyltransferase of Alkalilimnicola ehrlichii (strain ATCC BAA-1101 / DSM 17681 / MLHE-1).